Reading from the N-terminus, the 639-residue chain is Chaperone protein DnaK (639 aa).

Thr198 is subject to Phosphothreonine; by autocatalysis. Over residues 603–618 (AKAQTQGGAQEGAAKQ) the composition is skewed to low complexity. The tract at residues 603–639 (AKAQTQGGAQEGAAKQSNATADDVVDAEFEEVKDDKK) is disordered. The segment covering 625-639 (DVVDAEFEEVKDDKK) has biased composition (acidic residues).

The protein belongs to the heat shock protein 70 family.

In terms of biological role, acts as a chaperone. This Shewanella sp. (strain ANA-3) protein is Chaperone protein DnaK.